The sequence spans 411 residues: Phosphoglycerate kinase (411 aa).

Substrate contacts are provided by residues 22–24, R37, 60–63, R123, and R165; these read DFN and HLSR. ATP-binding positions include K216, E339, and 366–369; that span reads GGDS.

Belongs to the phosphoglycerate kinase family. Monomer.

The protein resides in the cytoplasm. The catalysed reaction is (2R)-3-phosphoglycerate + ATP = (2R)-3-phospho-glyceroyl phosphate + ADP. It functions in the pathway carbohydrate degradation; glycolysis; pyruvate from D-glyceraldehyde 3-phosphate: step 2/5. The protein is Phosphoglycerate kinase (pgk) of Mycoplasma genitalium (strain ATCC 33530 / DSM 19775 / NCTC 10195 / G37) (Mycoplasmoides genitalium).